The chain runs to 836 residues: Probable RING finger protein 207 homolog (836 aa).

Residues 8–42 (CTICKNDFEEPILFSCQHTTCRKCSNGSPSCKTCS) form an RING-type zinc finger. Residues 68-115 (EEMEQCANCEQITLPMFYCETCQQSLCLACRNVTHQARMFSSHKIISS) form a B box-type 1; atypical zinc finger. Zn(2+)-binding residues include Cys73, Cys76, Cys97, and His102. Residues 122–164 (YSSSLCKDHNEPYILYCSDVRKLVCIQCFNGRPLEERHSFISI) form a B box-type 2; degenerate zinc finger. The stretch at 527–557 (QNRIMAIEKEEENRRLNQEAKKKEELAGQSA) forms a coiled coil. Residues 540-552 (RRLNQEAKKKEEL) are compositionally biased toward basic and acidic residues. Residues 540 to 571 (RRLNQEAKKKEELAGQSAAMKSLKHGKTKRKE) are disordered. A compositionally biased stretch (basic residues) spans 561 to 571 (SLKHGKTKRKE).

In Caenorhabditis briggsae, this protein is Probable RING finger protein 207 homolog.